Reading from the N-terminus, the 178-residue chain is Large ribosomal subunit protein uL5 (178 aa).

It belongs to the universal ribosomal protein uL5 family. Part of the 50S ribosomal subunit; part of the 5S rRNA/L5/L18/L25 subcomplex. Contacts the 5S rRNA and the P site tRNA. Forms a bridge to the 30S subunit in the 70S ribosome.

Its function is as follows. This is one of the proteins that bind and probably mediate the attachment of the 5S RNA into the large ribosomal subunit, where it forms part of the central protuberance. In the 70S ribosome it contacts protein S13 of the 30S subunit (bridge B1b), connecting the 2 subunits; this bridge is implicated in subunit movement. Contacts the P site tRNA; the 5S rRNA and some of its associated proteins might help stabilize positioning of ribosome-bound tRNAs. The polypeptide is Large ribosomal subunit protein uL5 (Prochlorococcus marinus (strain MIT 9515)).